The sequence spans 379 residues: Fucose-specific lectin g276 (379 aa).

E126 is an alpha-L-fucose binding site. The beta-L-fucose site is built by E126, R163, and W185. W185, R222, and E234 together coordinate alpha-L-fucose. W242 and E282 together coordinate beta-L-fucose. Position 289 (W289) interacts with alpha-L-fucose.

This sequence belongs to the fungal fucose-specific lectin family.

Functionally, lectin that specifically binds to L-fucose. Is associated with the morphogenesis of the fungus, and plays a role in the formation of the constricting rings involved in nematode-trapping. The sequence is that of Fucose-specific lectin g276 from Arthrobotrys oligospora (strain ATCC 24927 / CBS 115.81 / DSM 1491) (Nematode-trapping fungus).